Reading from the N-terminus, the 236-residue chain is 5'-methylthioadenosine/S-adenosylhomocysteine nucleosidase (236 aa).

Catalysis depends on E12, which acts as the Proton acceptor. Substrate-binding positions include G78, I153, and 174–175; that span reads ME. D198 (proton donor) is an active-site residue.

This sequence belongs to the PNP/UDP phosphorylase family. MtnN subfamily.

It catalyses the reaction S-adenosyl-L-homocysteine + H2O = S-(5-deoxy-D-ribos-5-yl)-L-homocysteine + adenine. The catalysed reaction is S-methyl-5'-thioadenosine + H2O = 5-(methylsulfanyl)-D-ribose + adenine. The enzyme catalyses 5'-deoxyadenosine + H2O = 5-deoxy-D-ribose + adenine. It participates in amino-acid biosynthesis; L-methionine biosynthesis via salvage pathway; S-methyl-5-thio-alpha-D-ribose 1-phosphate from S-methyl-5'-thioadenosine (hydrolase route): step 1/2. Its function is as follows. Catalyzes the irreversible cleavage of the glycosidic bond in both 5'-methylthioadenosine (MTA) and S-adenosylhomocysteine (SAH/AdoHcy) to adenine and the corresponding thioribose, 5'-methylthioribose and S-ribosylhomocysteine, respectively. Also cleaves 5'-deoxyadenosine, a toxic by-product of radical S-adenosylmethionine (SAM) enzymes, into 5-deoxyribose and adenine. The polypeptide is 5'-methylthioadenosine/S-adenosylhomocysteine nucleosidase (Shewanella oneidensis (strain ATCC 700550 / JCM 31522 / CIP 106686 / LMG 19005 / NCIMB 14063 / MR-1)).